The primary structure comprises 690 residues: Glycine--tRNA ligase beta subunit (690 aa).

Belongs to the class-II aminoacyl-tRNA synthetase family. As to quaternary structure, tetramer of two alpha and two beta subunits.

It is found in the cytoplasm. The enzyme catalyses tRNA(Gly) + glycine + ATP = glycyl-tRNA(Gly) + AMP + diphosphate. The protein is Glycine--tRNA ligase beta subunit of Buchnera aphidicola subsp. Acyrthosiphon pisum (strain 5A).